The primary structure comprises 96 residues: Myticin-A (96 aa).

An N-terminal signal peptide occupies residues 1 to 20; sequence MKATILLAVLVAVFVAGTEA. The propeptide at 61–96 is removed in mature form; that stretch reads VNNPFRVNQVAKSINDLDYTPIMKSMENLDNGMDML.

Contains four disulfide bonds. In terms of tissue distribution, hemocytes.

The protein localises to the secreted. In terms of biological role, bacteriolytic activity against Gram-positive bacteria M.luteus, B.megaterium and A.viridans. This is Myticin-A from Mytilus galloprovincialis (Mediterranean mussel).